A 126-amino-acid chain; its full sequence is MASQTQGIQQLLAAEKRAAEKINEARKRKLQRTKQAKQEAQAEVEKYKQQREQEFKGFEQQYLGTKEDIESKIRRDTEDQINGMKQSVASNKQAVIVRLLQLVCDIKPELHHNLTLQKKLHGQFAA.

The disordered stretch occupies residues 23-45; that stretch reads NEARKRKLQRTKQAKQEAQAEVE. Over residues 26–35 the composition is skewed to basic residues; sequence RKRKLQRTKQ.

This sequence belongs to the V-ATPase G subunit family. V-ATPase is a heteromultimeric enzyme made up of two complexes: the ATP-hydrolytic V1 complex and the proton translocation V0 complex. The V1 complex consists of three catalytic AB heterodimers that form a heterohexamer, three peripheral stalks each consisting of EG heterodimers, one central rotor including subunits D and F, and the regulatory subunits C and H. The proton translocation complex V0 consists of the proton transport subunit a, a ring of proteolipid subunits c9c'', rotary subunit d, subunits e and f, and the accessory subunits vah-19/Ac45 and vah-20/PRR.

Subunit of the V1 complex of vacuolar(H+)-ATPase (V-ATPase), a multisubunit enzyme composed of a peripheral complex (V1) that hydrolyzes ATP and a membrane integral complex (V0) that translocates protons. V-ATPase is responsible for acidifying and maintaining the pH of intracellular compartments and in some cell types, is targeted to the plasma membrane, where it is responsible for acidifying the extracellular environment. In neurons, required for necrotic cell death by promoting intracellular acidification. In Caenorhabditis briggsae, this protein is Probable V-type proton ATPase subunit G.